Here is an 846-residue protein sequence, read N- to C-terminus: Iron-sulfur cluster assembly SufBD family protein Mb1496 (846 aa).

A disordered region spans residues 1 to 20 (MTLTPEASKSVAQPPTQAPL). Residues 388 to 528 (LAGYYLAEGH…LQSILARLGH (141 aa)) form the DOD-type homing endonuclease domain.

This sequence belongs to the iron-sulfur cluster assembly SufBD family. Post-translationally, this protein undergoes a protein self splicing that involves a post-translational excision of the intervening region (intein) followed by peptide ligation.

This chain is Iron-sulfur cluster assembly SufBD family protein Mb1496, found in Mycobacterium bovis (strain ATCC BAA-935 / AF2122/97).